Here is an 864-residue protein sequence, read N- to C-terminus: Mitochondrial 15S rRNA processing factor CCM1 (864 aa).

Residues 1–76 constitute a mitochondrion transit peptide; the sequence is MYMARCGPKN…REFSNTLKER (76 aa). PPR repeat units follow at residues 319–353 and 356–390; these read NKQNLTTVIQFYSRKEMTKQAWNTFDTMKFLSTKH and DICTYNTMLRICEKERNFPKALDLFQEIQDHNIKP.

Belongs to the CCM1 family. Binds to mitochondrial small subunit 15S rRNA.

The protein localises to the mitochondrion. Regulates mitochondrial small subunit maturation by controlling 15S rRNA 5'-end processing. Localizes to the 5' precursor of the 15S rRNA in a position that is subsequently occupied by mS47 in the mature yeast mtSSU. Uses structure and sequence-specific RNA recognition, binding to a single-stranded region of the precursor and specifically recognizing bases -6 to -1. The exchange of Ccm1 for mS47 is coupled to the irreversible removal of precursor rRNA that is accompanied by conformational changes of the mitoribosomal proteins uS5m and mS26. These conformational changes signal completion of 5'-end rRNA processing through protection of the mature 5'-end of the 15S rRNA and stabilization of mS47. The removal of the 5' precursor together with the dissociation of Ccm1 may be catalyzed by the 5'-3' exoribonuclease Pet127. Involved in the specific removal of group I introns in mitochondrial encoded transcripts. In Saccharomyces cerevisiae (strain RM11-1a) (Baker's yeast), this protein is Mitochondrial 15S rRNA processing factor CCM1 (CCM1).